Here is a 530-residue protein sequence, read N- to C-terminus: MATKLESSLIFALLSKCSVLSQTNLAFSLLAVTIIWLAISLFLWTYPGGPAWGKYLFGRLISGSYKTGNVIPGPKGFPLVGSMSLMSSTLAHRRIADAAEKFGAKRLMAFSLGETRVIVTCNPDVAKEILNSPVFADRPVKESAYSLMFNRAIGFAPHGVYWRTLRRIASNHLFSTKQIRRAETQRRVISSQMVEFLEKQSSNEPCFVRELLKTASLNNMMCSVFGQEYELEKNHVELREMVEEGYDLLGTLNWTDHLPWLSEFDPQRLRSRCSTLVPKVNRFVSRIISEHRNQTGDLPRDFVDVLLSLHGSDKLSDPDIIAVLWEMIFRGTDTVAVLIEWILARMVLHPDMQSTVQNELDQVVGKSRALDESDLASLPYLTAVVKEVLRLHPPGPLLSWARLAITDTIVDGRLVPAGTTAMVNMWAVSHDPHVWVDPLEFKPERFVAKEGEVEFSVLGSDLRLAPFGSGRRICPGKNLGFTTVMFWTAMMLHEFEWGPSDGNGVDLSEKLRLSCEMANPLPAKLRRRRS.

Residues 25–45 traverse the membrane as a helical segment; that stretch reads LAFSLLAVTIIWLAISLFLWT. Heme is bound at residue Cys474.

Belongs to the cytochrome P450 family. It depends on heme as a cofactor. As to expression, expressed in leaves, sepals, petals, stamens, carpels and developing ovules.

Its subcellular location is the membrane. Plays a role in seed and fruit development. Functions probably in association with CYP78A9 in the regulation of seed growth. Acts maternally to promote seed growth. This chain is Cytochrome P450 78A6 (CYP78A6), found in Arabidopsis thaliana (Mouse-ear cress).